Consider the following 317-residue polypeptide: Malate dehydrogenase (317 aa).

NAD(+) is bound by residues 13-18 (GAGNIG) and Asp-38. Residues Arg-87 and Arg-93 each coordinate substrate. NAD(+) contacts are provided by residues Asn-100 and 123 to 125 (VTN). 2 residues coordinate substrate: Asn-125 and Arg-156. Catalysis depends on His-180, which acts as the Proton acceptor.

It belongs to the LDH/MDH superfamily. MDH type 3 family.

It carries out the reaction (S)-malate + NAD(+) = oxaloacetate + NADH + H(+). Catalyzes the reversible oxidation of malate to oxaloacetate. This chain is Malate dehydrogenase, found in Anaplasma marginale (strain Florida).